The primary structure comprises 457 residues: Siroheme synthase 2 (457 aa).

The segment at 1-204 is precorrin-2 dehydrogenase /sirohydrochlorin ferrochelatase; that stretch reads MDHLPIFCQL…DDEQAVTRIT (204 aa). NAD(+) contacts are provided by residues 22–23 and 43–44; these read DV and LA. At Ser-128 the chain carries Phosphoserine. Positions 216–457 are uroporphyrinogen-III C-methyltransferase; it reads GEVVLVGAGP…RDKLNWFSSK (242 aa). Pro-225 serves as a coordination point for S-adenosyl-L-methionine. Asp-248 acts as the Proton acceptor in catalysis. The Proton donor role is filled by Lys-270. S-adenosyl-L-methionine contacts are provided by residues 301-303, Ile-306, 331-332, Met-382, and Gly-411; these read GGD and TA.

The protein in the N-terminal section; belongs to the precorrin-2 dehydrogenase / sirohydrochlorin ferrochelatase family. It in the C-terminal section; belongs to the precorrin methyltransferase family.

It catalyses the reaction uroporphyrinogen III + 2 S-adenosyl-L-methionine = precorrin-2 + 2 S-adenosyl-L-homocysteine + H(+). The catalysed reaction is precorrin-2 + NAD(+) = sirohydrochlorin + NADH + 2 H(+). It carries out the reaction siroheme + 2 H(+) = sirohydrochlorin + Fe(2+). Its pathway is cofactor biosynthesis; adenosylcobalamin biosynthesis; precorrin-2 from uroporphyrinogen III: step 1/1. The protein operates within cofactor biosynthesis; adenosylcobalamin biosynthesis; sirohydrochlorin from precorrin-2: step 1/1. It functions in the pathway porphyrin-containing compound metabolism; siroheme biosynthesis; precorrin-2 from uroporphyrinogen III: step 1/1. It participates in porphyrin-containing compound metabolism; siroheme biosynthesis; siroheme from sirohydrochlorin: step 1/1. Its pathway is porphyrin-containing compound metabolism; siroheme biosynthesis; sirohydrochlorin from precorrin-2: step 1/1. Its function is as follows. Multifunctional enzyme that catalyzes the SAM-dependent methylations of uroporphyrinogen III at position C-2 and C-7 to form precorrin-2 via precorrin-1. Then it catalyzes the NAD-dependent ring dehydrogenation of precorrin-2 to yield sirohydrochlorin. Finally, it catalyzes the ferrochelation of sirohydrochlorin to yield siroheme. The protein is Siroheme synthase 2 of Cronobacter sakazakii (strain ATCC BAA-894) (Enterobacter sakazakii).